Reading from the N-terminus, the 460-residue chain is ATP synthase subunit beta (460 aa).

Residue 150–157 (GGAGVGKT) participates in ATP binding.

It belongs to the ATPase alpha/beta chains family. In terms of assembly, F-type ATPases have 2 components, CF(1) - the catalytic core - and CF(0) - the membrane proton channel. CF(1) has five subunits: alpha(3), beta(3), gamma(1), delta(1), epsilon(1). CF(0) has three main subunits: a(1), b(2) and c(9-12). The alpha and beta chains form an alternating ring which encloses part of the gamma chain. CF(1) is attached to CF(0) by a central stalk formed by the gamma and epsilon chains, while a peripheral stalk is formed by the delta and b chains.

It is found in the cell inner membrane. It carries out the reaction ATP + H2O + 4 H(+)(in) = ADP + phosphate + 5 H(+)(out). Its function is as follows. Produces ATP from ADP in the presence of a proton gradient across the membrane. The catalytic sites are hosted primarily by the beta subunits. The sequence is that of ATP synthase subunit beta from Pectobacterium atrosepticum (strain SCRI 1043 / ATCC BAA-672) (Erwinia carotovora subsp. atroseptica).